A 363-amino-acid chain; its full sequence is Chorismate synthase (363 aa).

Residues Arg47 and Arg53 each contribute to the NADP(+) site. Residues 124–126 (RSS), Gly286, 301–305 (KPTAT), and Arg327 contribute to the FMN site.

It belongs to the chorismate synthase family. Homotetramer. FMNH2 serves as cofactor.

It catalyses the reaction 5-O-(1-carboxyvinyl)-3-phosphoshikimate = chorismate + phosphate. The protein operates within metabolic intermediate biosynthesis; chorismate biosynthesis; chorismate from D-erythrose 4-phosphate and phosphoenolpyruvate: step 7/7. Its function is as follows. Catalyzes the anti-1,4-elimination of the C-3 phosphate and the C-6 proR hydrogen from 5-enolpyruvylshikimate-3-phosphate (EPSP) to yield chorismate, which is the branch point compound that serves as the starting substrate for the three terminal pathways of aromatic amino acid biosynthesis. This reaction introduces a second double bond into the aromatic ring system. This is Chorismate synthase from Thermosynechococcus vestitus (strain NIES-2133 / IAM M-273 / BP-1).